Here is a 136-residue protein sequence, read N- to C-terminus: Early E3 15.3 kDa protein (136 aa).

Belongs to the adenoviridae E3_15 family.

In terms of biological role, protects virus-infected cells from TNF-induced cytolysis. The polypeptide is Early E3 15.3 kDa protein (Human adenovirus B serotype 3 (HAdV-3)).